The following is a 264-amino-acid chain: Small ribosomal subunit protein uS2 (264 aa).

The tract at residues 233–264 (AQTQAGGKAEQEAPATEEAADAQTEEAATPAE) is disordered.

It belongs to the universal ribosomal protein uS2 family.

This chain is Small ribosomal subunit protein uS2, found in Psychrobacter arcticus (strain DSM 17307 / VKM B-2377 / 273-4).